The chain runs to 665 residues: Protein LOW PHOTOSYNTHETIC EFFICIENCY 1, chloroplastic (665 aa).

A chloroplast-targeting transit peptide spans 1 to 68; it reads MQALSILPLK…VSSNRKVLFL (68 aa). PPR repeat units follow at residues 145–179, 181–217, 218–252, 253–283, 309–344, 345–375, 380–414, 422–456, 457–491, 492–526, 527–561, 562–596, and 597–631; these read PLQVFCAMIKGFGKDKRLKPAVAVVDWLKRKKSES, GVIGPNLFIYNSLLGAMRGFGEAEKILKDMEEEGIVP, NIVTYNTLMVIYMEEGEFLKALGILDLTKEKGFEP, NPITYSTALLVYRRMEDGMGALEFFVELREK, GRICYQVMRRWLVKDDNWTTRVLKLLNAMDSAGVRP, SREEHERLIWACTREEHYIVGKELYKRIRER, SLSVCNHLIWLMGKAKKWWAALEIYEDLLDEGPEP, VVSHFNILLSAASKRGIWRWGVRLLNKMEDKGLKP, QRRHWNAVLVACSKASETTAAIQIFKAMVDNGEKP, TVISYGALLSALEKGKLYDEAFRVWNHMIKVGIEP, NLYAYTTMASVLTGQQKFNLLDTLLKEMASKGIEP, SVVTFNAVISGCARNGLSGVAYEWFHRMKSENVEP, and NEITYEMLIEALANDAKPRLAYELHVKAQNEGLKL.

It belongs to the PPR family. P subfamily. Interacts with HCF173.

It localises to the plastid. It is found in the chloroplast thylakoid membrane. The protein localises to the chloroplast stroma. Its function is as follows. Required for light-regulated photosystem II (PSII) biogenesis and grana thylakoids formation by binding to the 5' UTR of PSII subunit mRNAs (e.g. psbJ, psbN and psbA) in a light-dependent manner through a redox-based mechanism, and facilitating the association of HCF173 with target mRNAs, which encodes PSII reaction center proteins (e.g. J, N and D1), thus regulating its expression by modulating ribosome loading. The protein is Protein LOW PHOTOSYNTHETIC EFFICIENCY 1, chloroplastic of Arabidopsis thaliana (Mouse-ear cress).